Here is a 562-residue protein sequence, read N- to C-terminus: Dihydroxy-acid dehydratase (562 aa).

D80 serves as a coordination point for Mg(2+). C121 contacts [2Fe-2S] cluster. 2 residues coordinate Mg(2+): D122 and K123. K123 carries the N6-carboxylysine modification. [2Fe-2S] cluster is bound at residue C194. E446 contacts Mg(2+). S472 functions as the Proton acceptor in the catalytic mechanism.

This sequence belongs to the IlvD/Edd family. Homodimer. Requires [2Fe-2S] cluster as cofactor. Mg(2+) is required as a cofactor.

It catalyses the reaction (2R)-2,3-dihydroxy-3-methylbutanoate = 3-methyl-2-oxobutanoate + H2O. The catalysed reaction is (2R,3R)-2,3-dihydroxy-3-methylpentanoate = (S)-3-methyl-2-oxopentanoate + H2O. Its pathway is amino-acid biosynthesis; L-isoleucine biosynthesis; L-isoleucine from 2-oxobutanoate: step 3/4. It functions in the pathway amino-acid biosynthesis; L-valine biosynthesis; L-valine from pyruvate: step 3/4. Its function is as follows. Functions in the biosynthesis of branched-chain amino acids. Catalyzes the dehydration of (2R,3R)-2,3-dihydroxy-3-methylpentanoate (2,3-dihydroxy-3-methylvalerate) into 2-oxo-3-methylpentanoate (2-oxo-3-methylvalerate) and of (2R)-2,3-dihydroxy-3-methylbutanoate (2,3-dihydroxyisovalerate) into 2-oxo-3-methylbutanoate (2-oxoisovalerate), the penultimate precursor to L-isoleucine and L-valine, respectively. In Staphylococcus haemolyticus (strain JCSC1435), this protein is Dihydroxy-acid dehydratase.